The sequence spans 211 residues: Bacteriorhodopsin (211 aa).

Residues 1 to 19 traverse the membrane as a helical segment; the sequence is IWLWLGTAGMFLGMLYFIA. The Cytoplasmic portion of the chain corresponds to 20-33; the sequence is RGWGETDSRRQKFY. The helical transmembrane segment at 34–52 threads the bilayer; the sequence is IATILITAIAFVNYLAMAL. At 53–68 the chain is on the extracellular side; sequence GFGLTIVEFAGEEHPI. A helical transmembrane segment spans residues 69–86; sequence YWARYSDWLFTTPLLLYD. The Cytoplasmic segment spans residues 87 to 97; that stretch reads LGLLAGADRNT. A helical transmembrane segment spans residues 98 to 117; the sequence is ITSLVSLDVLMIGTGLVATL. Residues 118-130 are Extracellular-facing; that stretch reads SAGSGVLSAGAER. A helical membrane pass occupies residues 131 to 150; the sequence is LVWWGISTAFLLVLLYFLFS. The Cytoplasmic segment spans residues 151 to 168; the sequence is SLSGRVADLPSDTRSTFK. Residues 169–187 traverse the membrane as a helical segment; sequence TLRNLVTVVWLVYPVWWLI. The Extracellular segment spans residues 188–199; the sequence is GTEGIGLVGIGI. The chain crosses the membrane as a helical span at residues 200–211; it reads ETAGFMVIDLTA.

It belongs to the archaeal/bacterial/fungal opsin family.

It is found in the cell membrane. In terms of biological role, light-driven proton pump. The sequence is that of Bacteriorhodopsin (bop) from Halobacterium halobium (strain port).